Reading from the N-terminus, the 381-residue chain is Protein COS6 (381 aa).

Residues 1-42 (MKENELKNEKSVDVLSVKQLESQKTVLPQDLFRSSFTWFCYE) lie on the Cytoplasmic side of the membrane. The chain crosses the membrane as a helical span at residues 43-63 (IYKSLVFRIWMLLWLPLSVWW). At 64-69 (KLSNNW) the chain is on the extracellular side. A helical transmembrane segment spans residues 70–90 (IYPLMVSLLVLFWGPVFVLVI). Residues 91 to 381 (FRLSRKRSLS…QLSCSEESLA (291 aa)) lie on the Cytoplasmic side of the membrane.

Belongs to the DUP/COS family.

The protein resides in the membrane. The chain is Protein COS6 (COS6) from Saccharomyces cerevisiae (strain ATCC 204508 / S288c) (Baker's yeast).